The sequence spans 90 residues: Small ribosomal subunit protein bS20 (90 aa).

It belongs to the bacterial ribosomal protein bS20 family.

Its function is as follows. Binds directly to 16S ribosomal RNA. The protein is Small ribosomal subunit protein bS20 of Acidiphilium cryptum (strain JF-5).